A 546-amino-acid chain; its full sequence is Glutathione reductase (546 aa).

The transit peptide at 2–46 (YKHRYFHFFFFFFFFLVSTKIIRSFTFLNNNTNLSNPVYFKKKAN) directs the protein to the apicoplast. FAD contacts are provided by S58 and G59. Residue S58 participates in glutathione binding. R65 provides a ligand contact to glutathione. Positions 78, 85, 86, and 94 each coordinate FAD. A disulfide bridge links C86 with C91. Y141 is a binding site for glutathione. A157 contacts FAD. The NADP(+) site is built by I233, E236, R253, R259, and G318. FAD-binding residues include D358 and T400. R408 serves as a coordination point for glutathione. V430 contributes to the NADP(+) binding site. H531 contributes to the FAD binding site. The Proton acceptor role is filled by H531.

This sequence belongs to the class-I pyridine nucleotide-disulfide oxidoreductase family. In terms of assembly, homodimer. The cofactor is FAD.

It is found in the cytoplasm. It localises to the plastid. The protein localises to the apicoplast. It catalyses the reaction 2 glutathione + NADP(+) = glutathione disulfide + NADPH + H(+). Its function is as follows. Catalyzes the reduction of glutathione disulfide (GSSG) to reduced glutathione (GSH). Constitutes the major mechanism to maintain a high GSH:GSSG ratio in the cytosol. The polypeptide is Glutathione reductase (Plasmodium falciparum (isolate 3D7)).